A 667-amino-acid polypeptide reads, in one-letter code: NADPH--cytochrome P450 reductase (667 aa).

Residues M1 to D8 are Lumenal-facing. Residues F9 to G29 form a helical membrane-spanning segment. The Cytoplasmic portion of the chain corresponds to T30–F667. The region spanning M72–W215 is the Flavodoxin-like domain. Residues L164–N173 and D199 each bind FMN. In terms of domain architecture, FAD-binding FR-type spans K277 to P511. R297 is an NADP(+) binding site. FAD contacts are provided by residues T468–V470 and G484–S487. NADP(+) contacts are provided by residues T527, S586–R587, and K592–Q596. W666 contacts FAD.

The protein belongs to the NADPH--cytochrome P450 reductase family. This sequence in the N-terminal section; belongs to the flavodoxin family. In the C-terminal section; belongs to the flavoprotein pyridine nucleotide cytochrome reductase family. Requires FAD as cofactor. FMN is required as a cofactor.

Its subcellular location is the endoplasmic reticulum membrane. It carries out the reaction 2 oxidized [cytochrome P450] + NADPH = 2 reduced [cytochrome P450] + NADP(+) + H(+). Its function is as follows. This enzyme is required for electron transfer from NADP to cytochrome P450 in microsomes. It can also provide electron transfer to heme oxygenase and cytochrome B5. The sequence is that of NADPH--cytochrome P450 reductase (redB) from Dictyostelium discoideum (Social amoeba).